Consider the following 344-residue polypeptide: HTH-type transcriptional regulator XC_2801 (344 aa).

Residues 3–60 (HDLNDTLIFVKVVEQGSFIAAANSLGLPKTTVSRKVQELETRLGARLLHRTTRRIGLT) enclose the HTH lysR-type domain. A DNA-binding region (H-T-H motif) is located at residues 20-39 (FIAAANSLGLPKTTVSRKVQ).

It belongs to the LysR transcriptional regulatory family. Interacts with the cyclic di-GMP effector XC_3703.

Activity is regulated by cyclic di-GMP. Cyclic di-GMP specifically binds to XC_3703, which inhibits the interaction of the XC_2801-XC_3703 complex with DNA and prevents the transcription of the target genes. Functionally, transcriptional regulator that directly or indirectly regulates the expression of virulence-related genes, including flhB, aaeA, fliL and flgG. Binds to the promoter of the target genes only in the presence of XC_3703. The chain is HTH-type transcriptional regulator XC_2801 from Xanthomonas campestris pv. campestris (strain 8004).